A 217-amino-acid chain; its full sequence is Ribosomal RNA small subunit methyltransferase G (217 aa).

S-adenosyl-L-methionine contacts are provided by residues Gly-85, Leu-90, 135–136, and Arg-149; that span reads IE.

The protein belongs to the methyltransferase superfamily. RNA methyltransferase RsmG family.

It localises to the cytoplasm. It carries out the reaction guanosine(527) in 16S rRNA + S-adenosyl-L-methionine = N(7)-methylguanosine(527) in 16S rRNA + S-adenosyl-L-homocysteine. Functionally, specifically methylates the N7 position of guanine in position 527 of 16S rRNA. The chain is Ribosomal RNA small subunit methyltransferase G from Acidiphilium cryptum (strain JF-5).